Here is a 435-residue protein sequence, read N- to C-terminus: ATP-dependent protease ATPase subunit HslU (435 aa).

ATP contacts are provided by residues Val18, 60-65 (GVGKTE), Asp248, Glu313, and Arg385.

This sequence belongs to the ClpX chaperone family. HslU subfamily. As to quaternary structure, a double ring-shaped homohexamer of HslV is capped on each side by a ring-shaped HslU homohexamer. The assembly of the HslU/HslV complex is dependent on binding of ATP.

It localises to the cytoplasm. ATPase subunit of a proteasome-like degradation complex; this subunit has chaperone activity. The binding of ATP and its subsequent hydrolysis by HslU are essential for unfolding of protein substrates subsequently hydrolyzed by HslV. HslU recognizes the N-terminal part of its protein substrates and unfolds these before they are guided to HslV for hydrolysis. The sequence is that of ATP-dependent protease ATPase subunit HslU from Rhodospirillum rubrum (strain ATCC 11170 / ATH 1.1.1 / DSM 467 / LMG 4362 / NCIMB 8255 / S1).